We begin with the raw amino-acid sequence, 353 residues long: Small ribosomal subunit biogenesis GTPase RsgA (353 aa).

Residues Met-1 to Asn-17 show a composition bias toward polar residues. The segment at Met-1–Thr-25 is disordered. One can recognise a CP-type G domain in the interval Ala-104–Phe-274. GTP contacts are provided by residues Asn-160–Asp-163 and Gly-214–Ser-222. Zn(2+) contacts are provided by Cys-298, Cys-303, His-305, and Cys-311.

Belongs to the TRAFAC class YlqF/YawG GTPase family. RsgA subfamily. Monomer. Associates with 30S ribosomal subunit, binds 16S rRNA. The cofactor is Zn(2+).

The protein localises to the cytoplasm. One of several proteins that assist in the late maturation steps of the functional core of the 30S ribosomal subunit. Helps release RbfA from mature subunits. May play a role in the assembly of ribosomal proteins into the subunit. Circularly permuted GTPase that catalyzes slow GTP hydrolysis, GTPase activity is stimulated by the 30S ribosomal subunit. This is Small ribosomal subunit biogenesis GTPase RsgA from Klebsiella pneumoniae (strain 342).